Reading from the N-terminus, the 443-residue chain is Adenylate cyclase (443 aa).

6 helical membrane passes run 47 to 69, 74 to 93, 98 to 120, 124 to 143, 148 to 167, and 180 to 202; these read VLTI…QLAT, WYIA…VPLL, GLVA…GWDV, AGAQ…LVGI, LAVG…EFLV, and SVSF…WFAL. Topologically, residues 203-443 are cytoplasmic; that stretch reads RDTARAEAVM…RGAEPRTAGV (241 aa). The 128-residue stretch at 251-378 folds into the Guanylate cyclase domain; the sequence is SVLFADIVGF…DAVNVASRME (128 aa). Mg(2+)-binding residues include Asp256 and Asp300.

Belongs to the adenylyl cyclase class-4/guanylyl cyclase family. In terms of assembly, homodimer. Can also exist as monomer. Mg(2+) serves as cofactor. It depends on Mn(2+) as a cofactor.

It localises to the cell membrane. The catalysed reaction is ATP = 3',5'-cyclic AMP + diphosphate. The sequence is that of Adenylate cyclase (cya) from Mycobacterium bovis (strain ATCC BAA-935 / AF2122/97).